A 479-amino-acid chain; its full sequence is 5-hydroxytryptamine receptor 2B (479 aa).

Over 1-55 the chain is Extracellular; that stretch reads MASSYKMSEQSTTSEHILQKTCDHLILTNRSGLETDSVAEEMKQTVEGQGHTVHW. N-linked (GlcNAc...) asparagine glycosylation is present at Asn-29. The helical transmembrane segment at 56 to 78 threads the bilayer; sequence AALLILAVIIPTIGGNILVILAV. Over 79 to 89 the chain is Cytoplasmic; it reads ALEKRLQYATN. A helical membrane pass occupies residues 90–112; it reads YFLMSLAIADLLVGLFVMPIALL. Residues 113-128 lie on the Extracellular side of the membrane; that stretch reads TIMFEAIWPLPLALCP. Cys-127 and Cys-206 form a disulfide bridge. Residues 129–150 traverse the membrane as a helical segment; the sequence is AWLFLDVLFSTASIMHLCAISL. Asp-134 and Thr-139 together coordinate ergotamine. Residues 151-153 carry the DRY motif; important for ligand-induced conformation changes motif; that stretch reads DRY. At 151–170 the chain is on the cytoplasmic side; that stretch reads DRYIAIKKPIQANQCNSRAT. The helical transmembrane segment at 171–191 threads the bilayer; the sequence is AFIKITVVWLISIGIAIPVPI. Residues 192–215 lie on the Extracellular side of the membrane; that stretch reads KGIETDVINPHNVTCELTKDRFGS. Leu-208 contributes to the ergotamine binding site. The [DE]RFG motif; may stabilize a conformation that preferentially activates signaling via beta-arrestin family members motif lies at 211-214; the sequence is DRFG. A helical membrane pass occupies residues 216–238; sequence FMVFGSLAAFFAPLTIMVVTYFL. Over 239 to 323 the chain is Cytoplasmic; that stretch reads TIHTLQKKAY…TISNEQRASK (85 aa). A helical membrane pass occupies residues 324-344; the sequence is ALGVVFFLFLLMWCPFFITNL. The Extracellular portion of the chain corresponds to 345-359; it reads TLALCDSCNQTTLKT. A disulfide bridge links Cys-349 with Cys-352. The helical transmembrane segment at 360–381 threads the bilayer; that stretch reads LLEIFVWIGYVSSGVNPLIYTL. The NPxxY motif; important for ligand-induced conformation changes and signaling signature appears at 375–379; that stretch reads NPLIY. Over 382 to 479 the chain is Cytoplasmic; the sequence is FNKTFREAFG…DKAEEQVSYI (98 aa). The S-palmitoyl cysteine moiety is linked to residue Cys-396. The PDZ-binding motif lies at 477–479; the sequence is SYI.

It belongs to the G-protein coupled receptor 1 family. Interacts (via C-terminus) with MPDZ. Ubiquitous. Detected in intestine, heart, skeletal muscle, testis, urinary bladder, stomach, liver, lung, brain and kidney. Detected in osteoblasts. Detected in the raphe nucleus in the brain, in dorsal root ganglion neurons, the brain stem, cerebellum and spinal cord. Detected in interstitial cells of Cajal in the small intestine.

The protein localises to the cell membrane. It is found in the synapse. Its subcellular location is the synaptosome. G-protein coupled receptor for 5-hydroxytryptamine (serotonin). Also functions as a receptor for various ergot alkaloid derivatives and psychoactive substances. Ligand binding causes a conformation change that triggers signaling via guanine nucleotide-binding proteins (G proteins) and modulates the activity of downstream effectors. HTR2B is coupled to G(q)/G(11) G alpha proteins and activates phospholipase C-beta, releasing diacylglycerol (DAG) and inositol 1,4,5-trisphosphate (IP3) second messengers that modulate the activity of phosphatidylinositol 3-kinase and promote the release of Ca(2+) ions from intracellular stores, respectively. Beta-arrestin family members inhibit signaling via G proteins and mediate activation of alternative signaling pathways. Plays a role in the regulation of dopamine and 5-hydroxytryptamine release, 5-hydroxytryptamine uptake and in the regulation of extracellular dopamine and 5-hydroxytryptamine levels, and thereby affects neural activity. May play a role in the perception of pain. Plays a role in the regulation of behavior, including impulsive behavior. Required for normal proliferation of embryonic cardiac myocytes and normal heart development. Protects cardiomyocytes against apoptosis. Plays a role in the adaptation of pulmonary arteries to chronic hypoxia. Plays a role in vasoconstriction. Required for normal osteoblast function and proliferation, and for maintaining normal bone density. Required for normal proliferation of the interstitial cells of Cajal in the intestine. In Mus musculus (Mouse), this protein is 5-hydroxytryptamine receptor 2B (Htr2b).